Reading from the N-terminus, the 607-residue chain is Elongation factor 4 (607 aa).

One can recognise a tr-type G domain in the interval E11 to D193. GTP contacts are provided by residues D23–T28 and N140–D143.

It belongs to the TRAFAC class translation factor GTPase superfamily. Classic translation factor GTPase family. LepA subfamily.

The protein localises to the cell membrane. The catalysed reaction is GTP + H2O = GDP + phosphate + H(+). Functionally, required for accurate and efficient protein synthesis under certain stress conditions. May act as a fidelity factor of the translation reaction, by catalyzing a one-codon backward translocation of tRNAs on improperly translocated ribosomes. Back-translocation proceeds from a post-translocation (POST) complex to a pre-translocation (PRE) complex, thus giving elongation factor G a second chance to translocate the tRNAs correctly. Binds to ribosomes in a GTP-dependent manner. This is Elongation factor 4 from Staphylococcus aureus (strain N315).